Consider the following 303-residue polypeptide: Small ribosomal subunit protein bS1m (303 aa).

Ser2 carries the post-translational modification N-acetylserine. Residues 2 to 13 constitute a mitochondrion; not cleaved transit peptide; that stretch reads SFAQILRGSRAM.

The protein belongs to the bacterial ribosomal protein bS1 family. Component of the mitochondrial small ribosomal subunit (mt-SSU). Mature yeast 74S mitochondrial ribosomes consist of a small (37S) and a large (54S) subunit. The 37S small subunit contains a 15S ribosomal RNA (15S mt-rRNA) and at least 32 different proteins. The 54S large subunit contains a 21S rRNA (21S mt-rRNA) and at least 45 different proteins. This subunit is mutually exclusive with mug178/small ribosomal subunit protein L51-b.

Its subcellular location is the mitochondrion. Its function is as follows. Component of the mitochondrial ribosome (mitoribosome), a dedicated translation machinery responsible for the synthesis of mitochondrial genome-encoded proteins, including at least some of the essential transmembrane subunits of the mitochondrial respiratory chain. The mitoribosomes are attached to the mitochondrial inner membrane and translation products are cotranslationally integrated into the membrane. bS1m functionally interacts with the 5'-UTR of mitochondrial mRNAs. Plays an essential role in mitochondrial translation. The chain is Small ribosomal subunit protein bS1m (mrp51) from Schizosaccharomyces pombe (strain 972 / ATCC 24843) (Fission yeast).